The primary structure comprises 95 residues: Aspartyl/glutamyl-tRNA(Asn/Gln) amidotransferase subunit C (95 aa).

Belongs to the GatC family. In terms of assembly, heterotrimer of A, B and C subunits.

The catalysed reaction is L-glutamyl-tRNA(Gln) + L-glutamine + ATP + H2O = L-glutaminyl-tRNA(Gln) + L-glutamate + ADP + phosphate + H(+). It carries out the reaction L-aspartyl-tRNA(Asn) + L-glutamine + ATP + H2O = L-asparaginyl-tRNA(Asn) + L-glutamate + ADP + phosphate + 2 H(+). Allows the formation of correctly charged Asn-tRNA(Asn) or Gln-tRNA(Gln) through the transamidation of misacylated Asp-tRNA(Asn) or Glu-tRNA(Gln) in organisms which lack either or both of asparaginyl-tRNA or glutaminyl-tRNA synthetases. The reaction takes place in the presence of glutamine and ATP through an activated phospho-Asp-tRNA(Asn) or phospho-Glu-tRNA(Gln). This is Aspartyl/glutamyl-tRNA(Asn/Gln) amidotransferase subunit C from Hyphomonas neptunium (strain ATCC 15444).